Here is a 454-residue protein sequence, read N- to C-terminus: V-type ATP synthase subunit I 2 (454 aa).

Residues 101–121 (EREGDAPSVPRGKSSVAHDSA) form a disordered region. Transmembrane regions (helical) follow at residues 254–274 (LLFG…VLGL), 293–313 (VFLS…EFFA), 351–371 (MAFF…GLII), and 424–444 (ACLS…SVCV).

Belongs to the V-ATPase 116 kDa subunit family.

The protein resides in the cell membrane. In terms of biological role, produces ATP from ADP in the presence of a proton gradient across the membrane. This chain is V-type ATP synthase subunit I 2 (atpI2), found in Treponema pallidum (strain Nichols).